A 235-amino-acid polypeptide reads, in one-letter code: Elongation factor Tu, chloroplastic (235 aa).

A tr-type G domain is found at 1–125; it reads KNMITGAAQM…KVDSYIPTPQ (125 aa). 47–50 contributes to the GTP binding site; that stretch reads NKED.

It belongs to the TRAFAC class translation factor GTPase superfamily. Classic translation factor GTPase family. EF-Tu/EF-1A subfamily.

Its subcellular location is the plastid. It localises to the chloroplast. It carries out the reaction GTP + H2O = GDP + phosphate + H(+). Its function is as follows. GTP hydrolase that promotes the GTP-dependent binding of aminoacyl-tRNA to the A-site of ribosomes during protein biosynthesis. The protein is Elongation factor Tu, chloroplastic (tufA) of Gonium pectorale (Green alga).